Reading from the N-terminus, the 356-residue chain is 3-dehydroquinate synthase (356 aa).

Residues 69–74 (DGEQYK), 103–107 (GVVGD), 127–128 (TT), lysine 140, and lysine 149 each bind NAD(+). Glutamate 182, histidine 245, and histidine 262 together coordinate Zn(2+).

The protein belongs to the sugar phosphate cyclases superfamily. Dehydroquinate synthase family. Requires Co(2+) as cofactor. The cofactor is Zn(2+). It depends on NAD(+) as a cofactor.

It is found in the cytoplasm. The enzyme catalyses 7-phospho-2-dehydro-3-deoxy-D-arabino-heptonate = 3-dehydroquinate + phosphate. It participates in metabolic intermediate biosynthesis; chorismate biosynthesis; chorismate from D-erythrose 4-phosphate and phosphoenolpyruvate: step 2/7. In terms of biological role, catalyzes the conversion of 3-deoxy-D-arabino-heptulosonate 7-phosphate (DAHP) to dehydroquinate (DHQ). The chain is 3-dehydroquinate synthase from Pseudoalteromonas translucida (strain TAC 125).